The primary structure comprises 601 residues: DNA topoisomerase I, mitochondrial (601 aa).

The transit peptide at 1–50 (MRVVRLLRLRAALTLLGEVPRRPASRGVPGSRRTQKGSGARWEKEKHEDG) directs the protein to the mitochondrion. Residues 22-48 (RPASRGVPGSRRTQKGSGARWEKEKHE) are disordered. Interaction with DNA regions lie at residues 261 to 262 (KY), 324 to 329 (RAGNEK), and 421 to 423 (TAK). The 334-residue stretch at 268–601 (CSKLKGETAW…LAMAGEDFEF (334 aa)) folds into the Topo IB-type catalytic domain. Y559 acts as the O-(3'-phospho-DNA)-tyrosine intermediate in catalysis.

This sequence belongs to the type IB topoisomerase family. The cofactor is Ca(2+). Requires Mg(2+) as cofactor. Ubiquitous; highest in skeletal muscle, heart, brain and fetal liver.

The protein localises to the mitochondrion. It carries out the reaction ATP-independent breakage of single-stranded DNA, followed by passage and rejoining.. In terms of biological role, releases the supercoiling and torsional tension of DNA introduced during duplication of mitochondrial DNA by transiently cleaving and rejoining one strand of the DNA duplex. Introduces a single-strand break via transesterification at a target site in duplex DNA. The scissile phosphodiester is attacked by the catalytic tyrosine of the enzyme, resulting in the formation of a DNA-(3'-phosphotyrosyl)-enzyme intermediate and the expulsion of a 5'-OH DNA strand. The free DNA strand then rotates around the intact phosphodiester bond on the opposing strand, thus removing DNA supercoils. Finally, in the religation step, the DNA 5'-OH attacks the covalent intermediate to expel the active-site tyrosine and restore the DNA phosphodiester backbone. The polypeptide is DNA topoisomerase I, mitochondrial (TOP1MT) (Homo sapiens (Human)).